The following is a 388-amino-acid chain: Succinate--CoA ligase [ADP-forming] subunit beta (388 aa).

An ATP-grasp domain is found at 9 to 244 (KQLFAEYGLP…PSQDDPREAH (236 aa)). ATP contacts are provided by residues Lys46, 53-55 (GRG), Glu99, Thr102, and Glu107. Mg(2+)-binding residues include Asn199 and Asp213. Substrate-binding positions include Asn264 and 321 to 323 (GIV).

It belongs to the succinate/malate CoA ligase beta subunit family. As to quaternary structure, heterotetramer of two alpha and two beta subunits. Mg(2+) serves as cofactor.

The catalysed reaction is succinate + ATP + CoA = succinyl-CoA + ADP + phosphate. The enzyme catalyses GTP + succinate + CoA = succinyl-CoA + GDP + phosphate. It functions in the pathway carbohydrate metabolism; tricarboxylic acid cycle; succinate from succinyl-CoA (ligase route): step 1/1. Succinyl-CoA synthetase functions in the citric acid cycle (TCA), coupling the hydrolysis of succinyl-CoA to the synthesis of either ATP or GTP and thus represents the only step of substrate-level phosphorylation in the TCA. The beta subunit provides nucleotide specificity of the enzyme and binds the substrate succinate, while the binding sites for coenzyme A and phosphate are found in the alpha subunit. The sequence is that of Succinate--CoA ligase [ADP-forming] subunit beta from Ectopseudomonas mendocina (strain ymp) (Pseudomonas mendocina).